The following is a 376-amino-acid chain: Histidinol-phosphate aminotransferase (376 aa).

At Lys230 the chain carries N6-(pyridoxal phosphate)lysine.

The protein belongs to the class-II pyridoxal-phosphate-dependent aminotransferase family. Histidinol-phosphate aminotransferase subfamily. Homodimer. The cofactor is pyridoxal 5'-phosphate.

The enzyme catalyses L-histidinol phosphate + 2-oxoglutarate = 3-(imidazol-4-yl)-2-oxopropyl phosphate + L-glutamate. It functions in the pathway amino-acid biosynthesis; L-histidine biosynthesis; L-histidine from 5-phospho-alpha-D-ribose 1-diphosphate: step 7/9. This chain is Histidinol-phosphate aminotransferase, found in Trichodesmium erythraeum (strain IMS101).